Consider the following 934-residue polypeptide: Protein translocase subunit SecA (934 aa).

ATP-binding positions include glutamine 87, 105–109 (GEGKT), and aspartate 515. Cysteine 918, cysteine 920, cysteine 929, and histidine 930 together coordinate Zn(2+).

Belongs to the SecA family. As to quaternary structure, monomer and homodimer. Part of the essential Sec protein translocation apparatus which comprises SecA, SecYEG and auxiliary proteins SecDF-YajC and YidC. Requires Zn(2+) as cofactor.

It is found in the cell inner membrane. It localises to the cytoplasm. It catalyses the reaction ATP + H2O + cellular proteinSide 1 = ADP + phosphate + cellular proteinSide 2.. Part of the Sec protein translocase complex. Interacts with the SecYEG preprotein conducting channel. Has a central role in coupling the hydrolysis of ATP to the transfer of proteins into and across the cell membrane, serving both as a receptor for the preprotein-SecB complex and as an ATP-driven molecular motor driving the stepwise translocation of polypeptide chains across the membrane. This Ralstonia pickettii (strain 12J) protein is Protein translocase subunit SecA.